Reading from the N-terminus, the 100-residue chain is uncharacterized protein (100 aa).

A run of 3 helical transmembrane segments spans residues 11–33 (VWSI…SVLM), 45–64 (WMLA…SLVY), and 68–90 (WEGA…GYLI).

It is found in the cell membrane. This is an uncharacterized protein from Bacillus subtilis (strain 168).